A 304-amino-acid polypeptide reads, in one-letter code: Homoserine O-succinyltransferase (304 aa).

Catalysis depends on C142, which acts as the Acyl-thioester intermediate. Substrate contacts are provided by K163 and S192. H235 functions as the Proton acceptor in the catalytic mechanism. The active site involves E237. A substrate-binding site is contributed by R249.

It belongs to the MetA family.

It localises to the cytoplasm. It catalyses the reaction L-homoserine + succinyl-CoA = O-succinyl-L-homoserine + CoA. It functions in the pathway amino-acid biosynthesis; L-methionine biosynthesis via de novo pathway; O-succinyl-L-homoserine from L-homoserine: step 1/1. Transfers a succinyl group from succinyl-CoA to L-homoserine, forming succinyl-L-homoserine. This is Homoserine O-succinyltransferase from Blochmanniella pennsylvanica (strain BPEN).